The chain runs to 312 residues: D-alanine--D-alanine ligase (312 aa).

One can recognise an ATP-grasp domain in the interval lysine 99–methionine 304. Position 131 to 186 (leucine 131 to threonine 186) interacts with ATP. Aspartate 257, glutamate 271, and asparagine 273 together coordinate Mg(2+).

The protein belongs to the D-alanine--D-alanine ligase family. Mg(2+) serves as cofactor. Mn(2+) is required as a cofactor.

It localises to the cytoplasm. It catalyses the reaction 2 D-alanine + ATP = D-alanyl-D-alanine + ADP + phosphate + H(+). It functions in the pathway cell wall biogenesis; peptidoglycan biosynthesis. Its function is as follows. Cell wall formation. The chain is D-alanine--D-alanine ligase from Carboxydothermus hydrogenoformans (strain ATCC BAA-161 / DSM 6008 / Z-2901).